A 525-amino-acid chain; its full sequence is GMP synthase [glutamine-hydrolyzing] (525 aa).

A Glutamine amidotransferase type-1 domain is found at R9–L207. C86 serves as the catalytic Nucleophile. Catalysis depends on residues H181 and E183. The region spanning W208–R400 is the GMPS ATP-PPase domain. S235 to S241 contributes to the ATP binding site.

In terms of assembly, homodimer.

The enzyme catalyses XMP + L-glutamine + ATP + H2O = GMP + L-glutamate + AMP + diphosphate + 2 H(+). It participates in purine metabolism; GMP biosynthesis; GMP from XMP (L-Gln route): step 1/1. Functionally, catalyzes the synthesis of GMP from XMP. The protein is GMP synthase [glutamine-hydrolyzing] of Ectopseudomonas mendocina (strain ymp) (Pseudomonas mendocina).